A 187-amino-acid chain; its full sequence is Accessory gene regulator protein B (187 aa).

5 helical membrane passes run 49–69, 82–102, 107–127, 143–163, and 164–184; these read LAYILNIFIFTLITNISFYLI, FWCYIESITLFIVLPLLVLHF, TLMMFLALLSVGVVIKYAPAA, YFSIIISTILFIITLFVKEPY, and TQFIQLGIIIQAITLLPIYYS.

This sequence belongs to the AgrB family.

The protein resides in the cell membrane. Its function is as follows. Essential for the production of a quorum sensing system signal molecule, the autoinducing peptide (AIP). This quorum sensing system is responsible for the regulation of the expression of virulence factor genes. Involved in the proteolytic processing of AgrD, the precursor of AIP. The sequence is that of Accessory gene regulator protein B from Staphylococcus aureus (strain MRSA252).